Here is a 417-residue protein sequence, read N- to C-terminus: Serine hydroxymethyltransferase (417 aa).

Residues Leu-121 and Gly-125–Leu-127 contribute to the (6S)-5,6,7,8-tetrahydrofolate site. Residue Lys-229 is modified to N6-(pyridoxal phosphate)lysine. Ser-355–Phe-357 lines the (6S)-5,6,7,8-tetrahydrofolate pocket.

It belongs to the SHMT family. In terms of assembly, homodimer. It depends on pyridoxal 5'-phosphate as a cofactor.

Its subcellular location is the cytoplasm. It carries out the reaction (6R)-5,10-methylene-5,6,7,8-tetrahydrofolate + glycine + H2O = (6S)-5,6,7,8-tetrahydrofolate + L-serine. It functions in the pathway one-carbon metabolism; tetrahydrofolate interconversion. The protein operates within amino-acid biosynthesis; glycine biosynthesis; glycine from L-serine: step 1/1. Its function is as follows. Catalyzes the reversible interconversion of serine and glycine with tetrahydrofolate (THF) serving as the one-carbon carrier. This reaction serves as the major source of one-carbon groups required for the biosynthesis of purines, thymidylate, methionine, and other important biomolecules. Also exhibits THF-independent aldolase activity toward beta-hydroxyamino acids, producing glycine and aldehydes, via a retro-aldol mechanism. The polypeptide is Serine hydroxymethyltransferase (Shewanella putrefaciens (strain CN-32 / ATCC BAA-453)).